The sequence spans 300 residues: MAVYAVGDLQGCLEPLQCLLEHVRFDPVQDRLWLVGDLVNRGPQSLQTLRYLYSIRESLVCVLGNHDLHLLAVARKNELLKKGDTLREILEAPDRDELLRWVRQQKLMHYDAERNIAMVHAGIAPQWSVKKALKQAAEVEHALQDDQLYGAFLDGMYGNEPAKWNNDLQGVTRLRVITNYFTRMRFCTSDGKLDLKSKEGVGTAIPGYAPWFSHQNRKTRDVKIIFGHWAALEGRCDEPGVFALDSGCVWGGAMTLLNVDTLERHQCNCDAVGNAATGIIASAQPGNAHIQQIPAQEPKQ.

The protein belongs to the Ap4A hydrolase family.

It carries out the reaction P(1),P(4)-bis(5'-adenosyl) tetraphosphate + H2O = 2 ADP + 2 H(+). In terms of biological role, hydrolyzes diadenosine 5',5'''-P1,P4-tetraphosphate to yield ADP. The chain is Bis(5'-nucleosyl)-tetraphosphatase, symmetrical from Pseudomonas syringae pv. tomato (strain ATCC BAA-871 / DC3000).